The primary structure comprises 220 residues: Protein ABA DEFICIENT 4, chloroplastic (220 aa).

The transit peptide at 1-37 (MGFSSFISQPLSSSLSVMKRNVSAKRSELCLDSSKIR) directs the protein to the chloroplast. Transmembrane regions (helical) follow at residues 77-97 (IASSVFAVGTTAVLPFYTLMV), 112-132 (SVPYIILGVLYVYLLYISWTP), 154-174 (MFSSEMTLASAWIHLLVVDLF), and 195-215 (SLCLLFCPVGIVSHFVTKAII).

Expressed in root vasculature, root hairs, leaves, trichomes, sepals, stamens, stigma, pedicels, siliques and embryo.

The protein localises to the plastid. Its subcellular location is the chloroplast membrane. Its function is as follows. Required for neoxanthin biosynthesis, an intermediary step in abscisic acid (ABA) biosynthesis. Probably not involved directly in the enzymatic conversion of violaxanthin to neoxanthin. Cannot convert violaxanthin to neoxanthin in vitro. Required for ABA biosynthesis in response to drought stress. Required for neoxanthin biosynthesis which is involved in photoprotection of photosystem II (PSII). Neoxanthin acts as an antioxidant within the photosystem PSII supercomplex. This Arabidopsis thaliana (Mouse-ear cress) protein is Protein ABA DEFICIENT 4, chloroplastic.